Here is a 321-residue protein sequence, read N- to C-terminus: Olfactory receptor 51G1 (321 aa).

The Extracellular segment spans residues 1-27; sequence MTILLNSSLQRATFFLTGFQGLEGLHG. Asparagine 6 carries an N-linked (GlcNAc...) asparagine glycan. A helical transmembrane segment spans residues 28-48; that stretch reads WISIPFCFIYLTVILGNLTIL. Residues 49-56 are Cytoplasmic-facing; it reads HVICTDAT. A helical membrane pass occupies residues 57–77; the sequence is LHGPMYYFLGMLAVTDLGLCL. Topologically, residues 78 to 101 are extracellular; sequence STLPTVLGIFWFDTREIGIPACFT. The cysteines at positions 99 and 191 are disulfide-linked. The helical transmembrane segment at 102 to 122 threads the bilayer; the sequence is QLFFIHTLSSMESSVLLSMSI. The Cytoplasmic segment spans residues 123-141; sequence DRYVAVCNPLHDSTVLTPA. A helical transmembrane segment spans residues 142–162; that stretch reads CIVKMGLSSVLRSALLILPLP. The Extracellular portion of the chain corresponds to 163 to 198; sequence FLLKRFQYCHSHVLAHAYCLHLEIMKLACSSIIVNH. Residues 199 to 219 traverse the membrane as a helical segment; the sequence is IYGLFVVACTVGVDSLLIFLS. Over 220–239 the chain is Cytoplasmic; it reads YALILRTVLSIASHQERLRA. A helical transmembrane segment spans residues 240-260; sequence LNTCVSHICAVLLFYIPMIGL. The Extracellular portion of the chain corresponds to 261-275; that stretch reads SLVHRFGEHLPRVVH. A helical transmembrane segment spans residues 276-296; sequence LFMSYVYLLVPPLMNPIIYSI. Over 297–321 the chain is Cytoplasmic; sequence KTKQIRQRIIKKFQFIKSLRCFWKD.

This sequence belongs to the G-protein coupled receptor 1 family.

It localises to the cell membrane. Functionally, odorant receptor. In Homo sapiens (Human), this protein is Olfactory receptor 51G1 (OR51G1).